The sequence spans 72 residues: uncharacterized protein (72 aa).

Belongs to the asfivirus I73R family.

It localises to the virion. This is an uncharacterized protein from Ornithodoros (relapsing fever ticks).